Reading from the N-terminus, the 1766-residue chain is DNA-directed RNA polymerase II subunit RPB1-B (1766 aa).

Zn(2+) is bound by residues C69, C72, C79, and H82. The Mg(2+) site is built by D487, D489, and D491. Residues 813–825 are bridging helix; sequence PHEFFFHTMAGRE. The disordered stretch occupies residues 1660 to 1766; sequence HAMSSAAPPS…EFGDEEEEEQ (107 aa). The span at 1706–1716 shows a compositional bias: basic and acidic residues; it reads RGDEPSTHRSD. The span at 1742–1756 shows a compositional bias: low complexity; that stretch reads PTAKTPQQAAPPTAA.

This sequence belongs to the RNA polymerase beta' chain family. In terms of assembly, component of the RNA polymerase II (Pol II) complex consisting of 12 subunits.

Its subcellular location is the nucleus. It catalyses the reaction RNA(n) + a ribonucleoside 5'-triphosphate = RNA(n+1) + diphosphate. Its function is as follows. DNA-dependent RNA polymerase catalyzes the transcription of DNA into RNA using the four ribonucleoside triphosphates as substrates. Largest and catalytic component of RNA polymerase II which synthesizes mRNA precursors and many functional non-coding RNAs. Forms the polymerase active center together with the second largest subunit. Pol II is the central component of the basal RNA polymerase II transcription machinery. It is composed of mobile elements that move relative to each other. RPB1 is part of the core element with the central large cleft, the clamp element that moves to open and close the cleft and the jaws that are thought to grab the incoming DNA template. At the start of transcription, a single-stranded DNA template strand of the promoter is positioned within the central active site cleft of Pol II. A bridging helix emanates from RPB1 and crosses the cleft near the catalytic site and is thought to promote translocation of Pol II by acting as a ratchet that moves the RNA-DNA hybrid through the active site by switching from straight to bent conformations at each step of nucleotide addition. During transcription elongation, Pol II moves on the template as the transcript elongates. The chain is DNA-directed RNA polymerase II subunit RPB1-B (TRP5.9) from Trypanosoma brucei brucei.